Reading from the N-terminus, the 359-residue chain is Peptide chain release factor 1 (359 aa).

Position 233 is an N5-methylglutamine (glutamine 233).

Belongs to the prokaryotic/mitochondrial release factor family. Post-translationally, methylated by PrmC. Methylation increases the termination efficiency of RF1.

The protein resides in the cytoplasm. Functionally, peptide chain release factor 1 directs the termination of translation in response to the peptide chain termination codons UAG and UAA. This Clostridium acetobutylicum (strain ATCC 824 / DSM 792 / JCM 1419 / IAM 19013 / LMG 5710 / NBRC 13948 / NRRL B-527 / VKM B-1787 / 2291 / W) protein is Peptide chain release factor 1.